We begin with the raw amino-acid sequence, 212 residues long: Phosphatidylserine decarboxylase proenzyme (212 aa).

Catalysis depends on serine 182, which acts as the Schiff-base intermediate with substrate; via pyruvic acid. Pyruvic acid (Ser); by autocatalysis is present on serine 182.

It belongs to the phosphatidylserine decarboxylase family. PSD-A subfamily. Heterodimer of a large membrane-associated beta subunit and a small pyruvoyl-containing alpha subunit. It depends on pyruvate as a cofactor. In terms of processing, is synthesized initially as an inactive proenzyme. Formation of the active enzyme involves a self-maturation process in which the active site pyruvoyl group is generated from an internal serine residue via an autocatalytic post-translational modification. Two non-identical subunits are generated from the proenzyme in this reaction, and the pyruvate is formed at the N-terminus of the alpha chain, which is derived from the carboxyl end of the proenzyme. The post-translation cleavage follows an unusual pathway, termed non-hydrolytic serinolysis, in which the side chain hydroxyl group of the serine supplies its oxygen atom to form the C-terminus of the beta chain, while the remainder of the serine residue undergoes an oxidative deamination to produce ammonia and the pyruvoyl prosthetic group on the alpha chain.

It is found in the cell membrane. The catalysed reaction is a 1,2-diacyl-sn-glycero-3-phospho-L-serine + H(+) = a 1,2-diacyl-sn-glycero-3-phosphoethanolamine + CO2. It functions in the pathway phospholipid metabolism; phosphatidylethanolamine biosynthesis; phosphatidylethanolamine from CDP-diacylglycerol: step 2/2. In terms of biological role, catalyzes the formation of phosphatidylethanolamine (PtdEtn) from phosphatidylserine (PtdSer). This is Phosphatidylserine decarboxylase proenzyme from Chlorobium phaeobacteroides (strain DSM 266 / SMG 266 / 2430).